A 347-amino-acid polypeptide reads, in one-letter code: D-alanine--D-alanine ligase (347 aa).

Residues 133-342 (KQAFAQASLP…FPDLVHRLIQ (210 aa)) enclose the ATP-grasp domain. 169-224 (ETELGYPCFVKPANLGSSVGIAKVRDRAELEAALDQAAALDRRLIIEAAIDNPREV) provides a ligand contact to ATP. Mg(2+) contacts are provided by Asp-296, Glu-309, and Asn-311.

Belongs to the D-alanine--D-alanine ligase family. The cofactor is Mg(2+). Mn(2+) serves as cofactor.

It is found in the cytoplasm. It carries out the reaction 2 D-alanine + ATP = D-alanyl-D-alanine + ADP + phosphate + H(+). It participates in cell wall biogenesis; peptidoglycan biosynthesis. Its function is as follows. Cell wall formation. The protein is D-alanine--D-alanine ligase of Synechococcus elongatus (strain ATCC 33912 / PCC 7942 / FACHB-805) (Anacystis nidulans R2).